The chain runs to 169 residues: Lipoprotein signal peptidase (169 aa).

Transmembrane regions (helical) follow at residues 15–35, 47–67, 75–95, and 107–127; these read WLWL…VVMN, ILPF…SFLS, WLFT…MSKL, and AMII…GFVV. Residues Asp128 and Asp146 contribute to the active site. Residues 141-161 form a helical membrane-spanning segment; it reads AFNLADMAICLGAAMIILDGF.

The protein belongs to the peptidase A8 family.

Its subcellular location is the cell inner membrane. The enzyme catalyses Release of signal peptides from bacterial membrane prolipoproteins. Hydrolyzes -Xaa-Yaa-Zaa-|-(S,diacylglyceryl)Cys-, in which Xaa is hydrophobic (preferably Leu), and Yaa (Ala or Ser) and Zaa (Gly or Ala) have small, neutral side chains.. It functions in the pathway protein modification; lipoprotein biosynthesis (signal peptide cleavage). Its function is as follows. This protein specifically catalyzes the removal of signal peptides from prolipoproteins. In Vibrio parahaemolyticus serotype O3:K6 (strain RIMD 2210633), this protein is Lipoprotein signal peptidase.